The primary structure comprises 971 residues: uncharacterized protein (971 aa).

An N-terminal signal peptide occupies residues 1–24 (MQSNLLKVLGVLAIVATLVCFIFA). The tract at residues 127 to 146 (RTRPGKSNLDDSGQMIPIPR) is disordered. 6 helical membrane passes run 611-631 (IKAILILYVMTYGAMFLLGFA), 721-741 (LGLSGIIYFIITFIAICIVII), 753-773 (AFMATCILIGIAPLFISFLLF), 795-815 (VVMMAGIIVLTQLFTIYLDFV), 832-852 (FIGTILPIALLNVPIFCINWF), and 865-885 (GVNMQNIVALVIIAYGMYGYV). The interval 933–971 (TGRAKSRLEQRNRTLEHAEQNSKKYKKRIGENTNEETLK) is disordered. Positions 938 to 954 (SRLEQRNRTLEHAEQNS) are enriched in basic and acidic residues.

This sequence belongs to the TrbL/VirB6 family.

It localises to the cell membrane. This is an uncharacterized protein from Rickettsia prowazekii (strain Madrid E).